Here is a 1417-residue protein sequence, read N- to C-terminus: DNA-directed RNA polymerase subunit beta' (1417 aa).

Positions 68, 70, 83, and 86 each coordinate Zn(2+). Positions 458, 460, and 462 each coordinate Mg(2+). Cysteine 811, cysteine 884, cysteine 891, and cysteine 894 together coordinate Zn(2+).

It belongs to the RNA polymerase beta' chain family. In terms of assembly, the RNAP catalytic core consists of 2 alpha, 1 beta, 1 beta' and 1 omega subunit. When a sigma factor is associated with the core the holoenzyme is formed, which can initiate transcription. It depends on Mg(2+) as a cofactor. Zn(2+) serves as cofactor.

The enzyme catalyses RNA(n) + a ribonucleoside 5'-triphosphate = RNA(n+1) + diphosphate. DNA-dependent RNA polymerase catalyzes the transcription of DNA into RNA using the four ribonucleoside triphosphates as substrates. The protein is DNA-directed RNA polymerase subunit beta' of Francisella tularensis subsp. holarctica (strain OSU18).